The sequence spans 345 residues: Meiotic recombination protein rec12 (345 aa).

A Topo IIA-type catalytic domain is found at 5-137 (DKKKVVRSWI…LNVEASAKGL (133 aa)). Tyr-98 (O-(5'-phospho-DNA)-tyrosine intermediate) is an active-site residue. Mg(2+) contacts are provided by Glu-179 and Asp-229.

This sequence belongs to the TOP6A family. Component of the DSB catalytic core (DSBC) complex, composed of at least rec12, rec6 and rec14. The complex interacts with mde2. It depends on Mg(2+) as a cofactor.

It localises to the cytoplasm. The protein resides in the nucleus. It carries out the reaction ATP-dependent breakage, passage and rejoining of double-stranded DNA.. In terms of biological role, required for formation of the double-strand breaks (DSBs) that initiate meiotic recombination. Required for crossover recombination and chiasmatic segregation of chromosomes during meiosis I. Also involved in the faithful equational segregation of chromosomes during meiosis II. The chain is Meiotic recombination protein rec12 from Schizosaccharomyces pombe (strain 972 / ATCC 24843) (Fission yeast).